We begin with the raw amino-acid sequence, 255 residues long: Glycerol-3-phosphate regulon repressor (255 aa).

One can recognise an HTH deoR-type domain in the interval 3–58 (QSLRHQKIIKLVEQSGYLSTEELVAALDVSPQTIRRDLNILAELDLIRRHHGGAAS). The segment at residues 20–39 (LSTEELVAALDVSPQTIRRD) is a DNA-binding region (H-T-H motif).

Functionally, repressor of the glycerol-3-phosphate regulon. The sequence is that of Glycerol-3-phosphate regulon repressor (glpR) from Haemophilus influenzae (strain ATCC 51907 / DSM 11121 / KW20 / Rd).